Here is a 240-residue protein sequence, read N- to C-terminus: Urease accessory protein UreF (240 aa).

Belongs to the UreF family. In terms of assembly, ureD, UreF and UreG form a complex that acts as a GTP-hydrolysis-dependent molecular chaperone, activating the urease apoprotein by helping to assemble the nickel containing metallocenter of UreC. The UreE protein probably delivers the nickel.

The protein resides in the cytoplasm. Required for maturation of urease via the functional incorporation of the urease nickel metallocenter. The chain is Urease accessory protein UreF from Bradyrhizobium sp. (strain ORS 278).